A 312-amino-acid chain; its full sequence is Acetyl-coenzyme A carboxylase carboxyl transferase subunit alpha (312 aa).

A CoA carboxyltransferase C-terminal domain is found at 36-286 (NLEKEISKTY…ADYVKKSLNE (251 aa)).

This sequence belongs to the AccA family. As to quaternary structure, acetyl-CoA carboxylase is a heterohexamer composed of biotin carboxyl carrier protein (AccB), biotin carboxylase (AccC) and two subunits each of ACCase subunit alpha (AccA) and ACCase subunit beta (AccD).

It localises to the cytoplasm. It catalyses the reaction N(6)-carboxybiotinyl-L-lysyl-[protein] + acetyl-CoA = N(6)-biotinyl-L-lysyl-[protein] + malonyl-CoA. It participates in lipid metabolism; malonyl-CoA biosynthesis; malonyl-CoA from acetyl-CoA: step 1/1. In terms of biological role, component of the acetyl coenzyme A carboxylase (ACC) complex. First, biotin carboxylase catalyzes the carboxylation of biotin on its carrier protein (BCCP) and then the CO(2) group is transferred by the carboxyltransferase to acetyl-CoA to form malonyl-CoA. This Campylobacter jejuni subsp. jejuni serotype O:23/36 (strain 81-176) protein is Acetyl-coenzyme A carboxylase carboxyl transferase subunit alpha.